Reading from the N-terminus, the 209-residue chain is Dual-specificity protein phosphatase SDP1 (209 aa).

Residues 1–11 (MNIYTSPTRTP) show a composition bias toward polar residues. Residues 1 to 43 (MNIYTSPTRTPNIAPKSGQRPSLPMLATDERSTDKESPNEDRE) are disordered. Residues 28–43 (TDERSTDKESPNEDRE) show a composition bias toward basic and acidic residues. Cysteines 47 and 142 form a disulfide. One can recognise a Tyrosine-protein phosphatase domain in the interval 59–196 (GPLLVLPEKI…LMEWEVALNA (138 aa)). His-111 is a binding site for 4-O-phospho-L-tyrosine. Catalysis depends on Cys-140, which acts as the Phosphocysteine intermediate.

Belongs to the protein-tyrosine phosphatase family. Non-receptor class dual specificity subfamily.

The catalysed reaction is O-phospho-L-tyrosyl-[protein] + H2O = L-tyrosyl-[protein] + phosphate. Functionally, mediates dephosphorylation of MAPK substrates such as SLT2, acquiring enhanced catalytic activity under oxidative conditions. The polypeptide is Dual-specificity protein phosphatase SDP1 (SDP1) (Saccharomyces cerevisiae (strain ATCC 204508 / S288c) (Baker's yeast)).